The following is a 110-amino-acid chain: Small ubiquitin-related modifier 3 (110 aa).

Residues K5 and K7 each participate in a glycyl lysine isopeptide (Lys-Gly) (interchain with G-Cter in SUMO2) cross-link. K11 is covalently cross-linked (Glycyl lysine isopeptide (Lys-Gly) (interchain with G-Cter in SUMO); alternate). K11 is covalently cross-linked (Glycyl lysine isopeptide (Lys-Gly) (interchain with G-Cter in SUMO2); alternate). The Ubiquitin-like domain occupies 15-92 (DHINLKVAGQ…IDVFQQQTGG (78 aa)). The segment covering 88–101 (QQTGGSASRGSVPT) has biased composition (polar residues). Residues 88–110 (QQTGGSASRGSVPTPNRCPDLCY) are disordered. G92 is covalently cross-linked (Glycyl lysine isopeptide (Gly-Lys) (interchain with K-? in acceptor proteins)). The propeptide occupies 93-110 (SASRGSVPTPNRCPDLCY).

Belongs to the ubiquitin family. SUMO subfamily. In terms of assembly, interacts with SAE2 and UBE2I. Covalently attached to a number of proteins. Interacts with USP25 (via ts SIM domain); the interaction sumoylates USP25 and inhibits its ubiquitin hydrolyzing activity. Interacts with BMAL1. In terms of processing, polymeric chains can be formed through Lys-11 cross-linking. Post-translationally, cleavage of precursor form by SENP1, SENP2 or SENP5 is necessary for function.

The protein resides in the cytoplasm. Its subcellular location is the nucleus. It localises to the PML body. Functionally, ubiquitin-like protein which can be covalently attached to target lysines either as a monomer or as a lysine-linked polymer. Does not seem to be involved in protein degradation and may function as an antagonist of ubiquitin in the degradation process. Plays a role in a number of cellular processes such as nuclear transport, DNA replication and repair, mitosis and signal transduction. Covalent attachment to its substrates requires prior activation by the E1 complex SAE1-SAE2 and linkage to the E2 enzyme UBE2I, and can be promoted by an E3 ligase such as PIAS1-4, RANBP2 or CBX4. Plays a role in the regulation of sumoylation status of SETX. The protein is Small ubiquitin-related modifier 3 of Mus musculus (Mouse).